Consider the following 103-residue polypeptide: N(4)-acetylcytidine amidohydrolase (103 aa).

One can recognise an ASCH domain in the interval 6-100; the sequence is ITFFQRFQED…AEDRFYVIEF (95 aa). Lys21 (proton acceptor) is an active-site residue. The active-site Nucleophile is Thr24. Glu74 (proton donor) is an active-site residue.

This sequence belongs to the N(4)-acetylcytidine amidohydrolase family.

The catalysed reaction is N(4)-acetylcytidine + H2O = cytidine + acetate + H(+). The enzyme catalyses N(4)-acetyl-2'-deoxycytidine + H2O = 2'-deoxycytidine + acetate + H(+). It carries out the reaction N(4)-acetylcytosine + H2O = cytosine + acetate + H(+). Functionally, catalyzes the hydrolysis of N(4)-acetylcytidine (ac4C). The polypeptide is N(4)-acetylcytidine amidohydrolase (Klebsiella pneumoniae (strain 342)).